A 270-amino-acid polypeptide reads, in one-letter code: ATP synthase subunit a (270 aa).

The next 7 helical transmembrane spans lie at 29 to 49 (VDTF…FAMV), 87 to 107 (IAPL…MDLF), 108 to 128 (PVDL…GLEP), 140 to 160 (DVNA…GFSI), 182 to 202 (PVGA…ELAA), 220 to 240 (LIFI…GAPW), and 241 to 261 (AIFH…LTIV).

The protein belongs to the ATPase A chain family. In terms of assembly, F-type ATPases have 2 components, CF(1) - the catalytic core - and CF(0) - the membrane proton channel. CF(1) has five subunits: alpha(3), beta(3), gamma(1), delta(1), epsilon(1). CF(0) has three main subunits: a(1), b(2) and c(9-12). The alpha and beta chains form an alternating ring which encloses part of the gamma chain. CF(1) is attached to CF(0) by a central stalk formed by the gamma and epsilon chains, while a peripheral stalk is formed by the delta and b chains.

The protein localises to the cell inner membrane. Key component of the proton channel; it plays a direct role in the translocation of protons across the membrane. This is ATP synthase subunit a from Chromobacterium violaceum (strain ATCC 12472 / DSM 30191 / JCM 1249 / CCUG 213 / NBRC 12614 / NCIMB 9131 / NCTC 9757 / MK).